We begin with the raw amino-acid sequence, 74 residues long: MKRDIHPEYVETQVSCTCGASFTTRSTIDNGTIRADVCSECHPFYTGKQKILDTGGRVARFEARFGKAAGSASK.

Residues Cys-16, Cys-18, Cys-38, and Cys-41 each contribute to the Zn(2+) site.

This sequence belongs to the bacterial ribosomal protein bL31 family. Type A subfamily. In terms of assembly, part of the 50S ribosomal subunit. Requires Zn(2+) as cofactor.

Binds the 23S rRNA. In Streptomyces griseus subsp. griseus (strain JCM 4626 / CBS 651.72 / NBRC 13350 / KCC S-0626 / ISP 5235), this protein is Large ribosomal subunit protein bL31.